Consider the following 230-residue polypeptide: MASLGLQLVGYVLGLLGLLGTVIAMLLPSWRTSSYVGASIVTAVGFSKGLWMECATHSTGITQCDIYSTMLGLPADIQAAQAMMVTSSAMSSLACIVSVVGMRCTVFFQESRAKDRVAVVGGVFFILGGLLGFIPVAWNLHGILRDFYSPLVPDSMKFEIGEALYLGIISSLFSLIAGIFLCFSCSPQGNRSNYYDAYQAQPLATRSSPRPGQAPKGKSEFNSYSLTGYV.

At 1–7 (MASLGLQ) the chain is on the cytoplasmic side. The chain crosses the membrane as a helical span at residues 8–28 (LVGYVLGLLGLLGTVIAMLLP). Residues 29 to 81 (SWRTSSYVGASIVTAVGFSKGLWMECATHSTGITQCDIYSTMLGLPADIQAAQ) are Extracellular-facing. A disulfide bridge links C54 with C64. A helical membrane pass occupies residues 82–102 (AMMVTSSAMSSLACIVSVVGM). Topologically, residues 103–116 (RCTVFFQESRAKDR) are cytoplasmic. Residues 117 to 137 (VAVVGGVFFILGGLLGFIPVA) form a helical membrane-spanning segment. Over 138–162 (WNLHGILRDFYSPLVPDSMKFEIGE) the chain is Extracellular. Residues 163–183 (ALYLGIISSLFSLIAGIFLCF) form a helical membrane-spanning segment. Residues 184 to 230 (SCSPQGNRSNYYDAYQAQPLATRSSPRPGQAPKGKSEFNSYSLTGYV) are Cytoplasmic-facing. A disordered region spans residues 205–230 (TRSSPRPGQAPKGKSEFNSYSLTGYV). Residue K218 forms a Glycyl lysine isopeptide (Lys-Gly) (interchain with G-Cter in SUMO) linkage. 2 positions are modified to phosphoserine: S219 and S223. A compositionally biased stretch (polar residues) spans 220-230 (EFNSYSLTGYV). The interval 229–230 (YV) is interaction with TJP1, TJP2 and TJP3.

Belongs to the claudin family. Can form homo- and heteropolymers with other claudins to mediate paracellular barrier and channel functions of tight junctions in response to physiological stimuli. Homopolymers interact with CLDN3, but not CLDN1, homopolymers. Directly interacts with TJP1/ZO-1, TJP2/ZO-2 and TJP3/ZO-3. The disulfide bond is necessary for pore formation, but is not required for correct protein trafficking.

The protein localises to the cell junction. Its subcellular location is the tight junction. The protein resides in the cell membrane. It carries out the reaction Na(+)(in) = Na(+)(out). The enzyme catalyses K(+)(in) = K(+)(out). The catalysed reaction is Rb(+)(in) = Rb(+)(out). It catalyses the reaction Li(+)(in) = Li(+)(out). It carries out the reaction Cs(+)(in) = Cs(+)(out). The enzyme catalyses Ca(2+)(in) = Ca(2+)(out). The catalysed reaction is methylamine(out) = methylamine(in). It catalyses the reaction choline(out) = choline(in). It carries out the reaction H2O(in) = H2O(out). Functionally, forms paracellular channels: polymerizes in tight junction strands with cation- and water-selective channels through the strands, conveying epithelial permeability in a process known as paracellular tight junction permeability. In intestinal epithelium, allows for sodium and water fluxes from the peritoneal side to the lumen of the intestine to regulate nutrient absorption and clear enteric pathogens as part of mucosal immune response. In kidney, allows passive sodium and calcium reabsorption across proximal tubules from the lumen back to the bloodstream. In the hepatobiliary tract, allows paracellular water and cation fluxes in the hepatic perivenous areas and biliary epithelium to generate bile flow and maintain osmotic gradients. In Bos taurus (Bovine), this protein is Claudin-2 (CLDN2).